Reading from the N-terminus, the 303-residue chain is Monoglyceride lipase (303 aa).

T10 is subject to Phosphothreonine. Position 58 is a 3'-nitrotyrosine (Y58). S122 (nucleophile) is an active-site residue. At S189 the chain carries Phosphoserine. Active-site charge relay system residues include D239 and H269.

Belongs to the AB hydrolase superfamily. Monoacylglycerol lipase family. In terms of assembly, homodimer. As to expression, ubiquitous. Highly expressed in adipose tissue, adrenal gland, ovary, heart, spleen, lung, skeletal muscle, kidney and testis. Highly expressed throughout the brain.

The protein localises to the cytoplasm. Its subcellular location is the cytosol. It localises to the membrane. It carries out the reaction Hydrolyzes glycerol monoesters of long-chain fatty acids.. It catalyses the reaction a 1-acylglycerol + H2O = glycerol + a fatty acid + H(+). The enzyme catalyses a 2-acylglycerol + H2O = glycerol + a fatty acid + H(+). The catalysed reaction is 1-octanoylglycerol + H2O = octanoate + glycerol + H(+). It carries out the reaction 2-(5Z,8Z,11Z,14Z-eicosatetraenoyl)-glycerol + H2O = glycerol + (5Z,8Z,11Z,14Z)-eicosatetraenoate + H(+). It catalyses the reaction 1-decanoylglycerol + H2O = decanoate + glycerol + H(+). The enzyme catalyses 1-dodecanoylglycerol + H2O = dodecanoate + glycerol + H(+). The catalysed reaction is 1-tetradecanoylglycerol + H2O = tetradecanoate + glycerol + H(+). It carries out the reaction 2-hexadecanoylglycerol + H2O = glycerol + hexadecanoate + H(+). It catalyses the reaction 1-(9Z-octadecenoyl)-glycerol + H2O = glycerol + (9Z)-octadecenoate + H(+). The enzyme catalyses 2-(9Z-octadecenoyl)-glycerol + H2O = glycerol + (9Z)-octadecenoate + H(+). The catalysed reaction is 2-(9Z,12Z-octadecadienoyl)-glycerol + H2O = (9Z,12Z)-octadecadienoate + glycerol + H(+). It carries out the reaction 1-(5Z,8Z,11Z,14Z-eicosatetraenoyl)-glycerol + H2O = glycerol + (5Z,8Z,11Z,14Z)-eicosatetraenoate + H(+). It catalyses the reaction 1-(9Z,12Z-octadecadienoyl)-glycerol + H2O = (9Z,12Z)-octadecadienoate + glycerol + H(+). The enzyme catalyses 1-hexadecanoylglycerol + H2O = glycerol + hexadecanoate + H(+). The catalysed reaction is 1-octadecanoylglycerol + H2O = octadecanoate + glycerol + H(+). It carries out the reaction prostaglandin E2 1-glyceryl ester + H2O = prostaglandin E2 + glycerol + H(+). It catalyses the reaction prostaglandin D2-1-glycerol ester + H2O = prostaglandin D2 + glycerol + H(+). The enzyme catalyses 2-glyceryl-15-deoxy-Delta(12,14)-prostaglandin J2 + H2O = 15-deoxy-Delta(12,14)-prostaglandin J2 + glycerol + H(+). The catalysed reaction is prostaglandin F2alpha 1-glyceryl ester + H2O = prostaglandin F2alpha + glycerol + H(+). The protein operates within glycerolipid metabolism; triacylglycerol degradation. Functionally, converts monoacylglycerides to free fatty acids and glycerol. Hydrolyzes the endocannabinoid 2-arachidonoylglycerol, and thereby contributes to the regulation of endocannabinoid signaling, nociperception and perception of pain. Regulates the levels of fatty acids that serve as signaling molecules and promote cancer cell migration, invasion and tumor growth. The chain is Monoglyceride lipase from Rattus norvegicus (Rat).